A 587-amino-acid chain; its full sequence is 5-aminolevulinate synthase, erythroid-specific, mitochondrial (587 aa).

Residues 1–49 (MVTAAMLLQRCPVLIRSPTGLLGKMIKTHQFLFGIGRCPILATQGPSFS) constitute a mitochondrion transit peptide. Arg163 contributes to the succinyl-CoA binding site. Pyridoxal 5'-phosphate is bound by residues Cys258 and Phe259. Ser280 and Lys299 together coordinate succinyl-CoA. 3 residues coordinate pyridoxal 5'-phosphate: Ser332, His360, and Thr388. Residue Lys391 is part of the active site. Lys391 bears the N6-(pyridoxal phosphate)lysine mark. 2 residues coordinate pyridoxal 5'-phosphate: Thr420 and Thr421. Thr508 contacts succinyl-CoA.

This sequence belongs to the class-II pyridoxal-phosphate-dependent aminotransferase family. Homodimer. Interacts with SUCLA2. Requires pyridoxal 5'-phosphate as cofactor.

The protein localises to the mitochondrion inner membrane. It catalyses the reaction succinyl-CoA + glycine + H(+) = 5-aminolevulinate + CO2 + CoA. It functions in the pathway porphyrin-containing compound metabolism; protoporphyrin-IX biosynthesis; 5-aminolevulinate from glycine: step 1/1. In terms of biological role, catalyzes the pyridoxal 5'-phosphate (PLP)-dependent condensation of succinyl-CoA and glycine to form aminolevulinic acid (ALA), with CoA and CO2 as by-products. Contributes significantly to heme formation during erythropoiesis. The chain is 5-aminolevulinate synthase, erythroid-specific, mitochondrial (ALAS2) from Bos taurus (Bovine).